The sequence spans 189 residues: Der GTPase-activating protein YihI (189 aa).

The interval 1-81 (MARKKKTRRV…ALAKKDPRLG (81 aa)) is disordered. Basic and acidic residues-rich tracts occupy residues 9–27 (RVSDIMPARKVDKKVELPK) and 35–46 (TRYELDAKARED). Residues 60-71 (RHSATENNNNHQ) show a composition bias toward polar residues.

Belongs to the YihI family. As to quaternary structure, interacts with Der.

Functionally, a GTPase-activating protein (GAP) that modifies Der/EngA GTPase function. May play a role in ribosome biogenesis. The protein is Der GTPase-activating protein YihI of Pasteurella multocida (strain Pm70).